The following is a 304-amino-acid chain: tRNA pseudouridine synthase B (304 aa).

The active-site Nucleophile is the Asp44.

Belongs to the pseudouridine synthase TruB family. Type 1 subfamily.

The enzyme catalyses uridine(55) in tRNA = pseudouridine(55) in tRNA. Responsible for synthesis of pseudouridine from uracil-55 in the psi GC loop of transfer RNAs. The polypeptide is tRNA pseudouridine synthase B (Novosphingobium aromaticivorans (strain ATCC 700278 / DSM 12444 / CCUG 56034 / CIP 105152 / NBRC 16084 / F199)).